Here is a 662-residue protein sequence, read N- to C-terminus: MCPARLRTPRTASLPTHRRSAMTTANPLNTSFTSADAAELYQVPNWSGGWFRVSDKGLMEATPAPGLHASLRAIVDEIVDRGESLPVILRFPQVLAGRVKHLNEAFQAAINEYNYSGHYQGVFPIKVNQRRAVVETVAAAGYDYAHGLEAGSKAELALCLAQKMHPDALLCCNGFKDDGFIKLALWGRTLGKNVVITIEKFTELDRILKQAKALGVKPAVGVRFKLHARGSGQWEESGGDQAKFGLNAYELLRVVERLKEENMLDSLVMLHTHIGSQITDIRRVKVAVREAAQTYAGLIAAGADLKYLNVGGGLGVDYDGSKTTFYASMNYTVKEYAADIVYTVQEVCKAREVPEPVIVSESGRALTAHHAVLILPVVDVTGPTRNLEDQELTVPGEDSHQIVRDMYETLENISMRNYRESYNDAVGDKQTLHNLFDLGYVTLEDRARGEALFNAILRKIAKLIQGEKYVPDELEDLQKVLADKFICNFSLFQSLPDNWAIGALFPIVPLDRLNEQPTRQATLVDITCDSDGKVEKFIDLRDVKATLPLHEPGDRPYYLGAFLMGAYQDVLGSAHNLFGKVSEAHVTVRPGGRFNIDLFVRGQKARRMIESMGYEEPMLRDAIEDQADAAIGRGTLTQEQEHELLEDYGEELLGYTYLEYES.

K126 carries the post-translational modification N6-(pyridoxal phosphate)lysine. 308-318 (LNVGGGLGVDY) provides a ligand contact to substrate.

Belongs to the Orn/Lys/Arg decarboxylase class-II family. SpeA subfamily. The cofactor is Mg(2+). It depends on pyridoxal 5'-phosphate as a cofactor.

The catalysed reaction is L-arginine + H(+) = agmatine + CO2. Functionally, catalyzes the biosynthesis of agmatine from arginine. The polypeptide is Biosynthetic arginine decarboxylase (Deinococcus radiodurans (strain ATCC 13939 / DSM 20539 / JCM 16871 / CCUG 27074 / LMG 4051 / NBRC 15346 / NCIMB 9279 / VKM B-1422 / R1)).